The chain runs to 668 residues: Patellin-5 (668 aa).

Positions 1–263 are disordered; sequence MSQDSATTTP…STTTSTVASR (263 aa). Basic and acidic residues-rich tracts occupy residues 55 to 68, 82 to 100, 107 to 125, and 132 to 150; these read ESNHTAEVVSEKVT, AAEDSEQTHEVTPETETAK, TAEDSEQTHEVTPEKETVK, and VAEDSEQTHEVTPETETVK. Over residues 170–186 the composition is skewed to polar residues; sequence TPETETSEADTSLLVTS. The span at 218-231 shows a compositional bias: acidic residues; it reads VEDWTEPELPDEAV. The segment covering 244–254 has biased composition (pro residues); the sequence is PEPQTPPPPPS. Phosphoserine is present on Ser290. The 176-residue stretch at 377–552 folds into the CRAL-TRIO domain; the sequence is DENLGDDLDK…QYGGLSVDNC (176 aa). In terms of domain architecture, GOLD spans 556 to 662; it reads SDFTHDDIAT…KKMLIYRFKV (107 aa).

Belongs to the patellin family.

It localises to the membrane. It is found in the cytoplasm. Carrier protein that may be involved in membrane-trafficking events associated with cell plate formation during cytokinesis. Binds to some hydrophobic molecules such as phosphoinositides and promotes their transfer between the different cellular sites. The protein is Patellin-5 (PATL5) of Arabidopsis thaliana (Mouse-ear cress).